The following is a 430-amino-acid chain: Adenylosuccinate synthetase (430 aa).

GTP-binding positions include 12 to 18 and 40 to 42; these read GDEGKGK and GHT. The active-site Proton acceptor is D13. Mg(2+)-binding residues include D13 and G40. IMP contacts are provided by residues 13 to 16, 38 to 41, T130, R144, Q224, T239, and R303; these read DEGK and NAGH. H41 functions as the Proton donor in the catalytic mechanism. A substrate-binding site is contributed by 299-305; sequence TNTGRPR. GTP-binding positions include R305, 331–333, and 413–415; these read KLD and STS.

Belongs to the adenylosuccinate synthetase family. As to quaternary structure, homodimer. Mg(2+) is required as a cofactor.

Its subcellular location is the cytoplasm. It catalyses the reaction IMP + L-aspartate + GTP = N(6)-(1,2-dicarboxyethyl)-AMP + GDP + phosphate + 2 H(+). Its pathway is purine metabolism; AMP biosynthesis via de novo pathway; AMP from IMP: step 1/2. In terms of biological role, plays an important role in the de novo pathway of purine nucleotide biosynthesis. Catalyzes the first committed step in the biosynthesis of AMP from IMP. This is Adenylosuccinate synthetase from Rhodopseudomonas palustris (strain HaA2).